We begin with the raw amino-acid sequence, 463 residues long: A-type ATP synthase subunit B (463 aa).

The protein belongs to the ATPase alpha/beta chains family. In terms of assembly, has multiple subunits with at least A(3), B(3), C, D, E, F, H, I and proteolipid K(x).

It is found in the cell membrane. In terms of biological role, component of the A-type ATP synthase that produces ATP from ADP in the presence of a proton gradient across the membrane. The B chain is a regulatory subunit. The polypeptide is A-type ATP synthase subunit B (Methanothrix thermoacetophila (strain DSM 6194 / JCM 14653 / NBRC 101360 / PT) (Methanosaeta thermophila)).